The sequence spans 160 residues: Vegetative-specific protein V4 (160 aa).

Tandem repeats lie at residues 151–153 (NQP), 154–156 (NQP), and 157–159 (NQG). The 3 X 3 AA tandem repeats of N-Q-[PG] stretch occupies residues 151 to 159 (NQPNQPNQG).

Functionally, unknown. Its expression during growth is not required for growth but for the proper initiation of development, therefore playing a role in the transition from growth to development. The polypeptide is Vegetative-specific protein V4 (lmcB) (Dictyostelium discoideum (Social amoeba)).